A 167-amino-acid chain; its full sequence is Aphrodisin (167 aa).

The signal sequence occupies residues 1–16 (MVKILVLALVFSLAHA). Gln-17 is subject to Pyrrolidone carboxylic acid. 2 cysteine pairs are disulfide-bonded: Cys-54/Cys-58 and Cys-73/Cys-165. 2 N-linked (GlcNAc...) asparagine glycosylation sites follow: Asn-57 and Asn-85.

Belongs to the calycin superfamily. Lipocalin family. Expressed in the vagina, uterus, and Bartholin's glands of female hamsters. Secreted in vaginal discharge.

The protein localises to the secreted. In terms of biological role, acts as an aphrodisiac pheromone, reliably eliciting copulatory behavior from male hamster. In Mesocricetus auratus (Golden hamster), this protein is Aphrodisin.